Here is a 1873-residue protein sequence, read N- to C-terminus: Girdin (1873 aa).

The region spanning 12–132 (QFMTSPLVTW…KLLLLLLGCA (121 aa)) is the Calponin-homology (CH) domain. A coiled-coil region spans residues 196 to 425 (HLRRLIDERD…EMAQKQSMDE (230 aa)). Phosphoserine is present on residues Ser-233, Ser-237, and Ser-449. Coiled-coil stretches lie at residues 458-1232 (TSSK…ESKN) and 1268-1385 (HKNL…KFYD). 2 disordered regions span residues 816–841 (ENKS…NKRL) and 1013–1034 (EERM…GRES). At Ser-1020 the chain carries Phosphoserine. Ser-1387 bears the Phosphoserine mark. The segment at 1390 to 1408 (RRRGNWITLKMRKLIKSKK) is phosphoinositide-binding. The segment covering 1407–1416 (KKDINRERQK) has biased composition (basic and acidic residues). Disordered regions lie at residues 1407–1459 (KKDI…LGTK), 1560–1602 (TTSF…SNNN), and 1616–1643 (QSRP…GSSP). Ser-1417 is modified (phosphoserine; by PKB/AKT1). 4 stretches are compositionally biased toward polar residues: residues 1417–1430 (SLTL…SSEG), 1445–1459 (VGSN…LGTK), 1560–1579 (TTSF…STGS), and 1616–1626 (QSRPQSHSSGD). Thr-1421 is subject to Phosphothreonine. The GBA signature appears at 1674-1704 (KAGSPGSEVVTLQQFLEESNKLTSIQLKSSS). 3 positions are modified to phosphoserine: Ser-1677, Ser-1692, and Ser-1719. The interval 1715 to 1825 (SLSVSSDFLG…GTTRRTSIHD (111 aa)) is SH2-like; required for interaction with growth factor receptors. A disordered region spans residues 1738–1873 (SGKTPGDFYD…KSRSREQQSS (136 aa)). Residues 1745 to 1755 (FYDRRTTKPEF) are compositionally biased toward basic and acidic residues. Tyr-1767 carries the phosphotyrosine modification. 3 stretches are compositionally biased toward polar residues: residues 1768–1781 (TISS…STQG), 1789–1801 (TSVS…SNPY), and 1809–1820 (SVISTAEGTTRR). Phosphotyrosine is present on Tyr-1801. 2 positions are modified to phosphoserine: Ser-1822 and Ser-1839. A compositionally biased stretch (basic and acidic residues) spans 1822–1832 (SIHDFLSKDSR). The segment covering 1839-1852 (SSPPTAGSSSTTAS) has biased composition (low complexity). Residues 1858–1873 (QESRNSKSRSREQQSS) are compositionally biased toward basic and acidic residues.

It belongs to the CCDC88 family. In terms of assembly, homodimer. Interacts (via GBA motif) with guanine nucleotide-binding protein G(i) alpha subunits GNAI1, GNAI2 and GNAI3. Also interacts (via GNA motif) with guanine nucleotide-binding protein G(s) alpha subunit GNAS. Interaction with G(i) alpha subunits occurs before interaction with GNAS and is regulated by phosphorylation; phosphorylation at Ser-1677 enhances binding to G(i) alpha subunits while phosphorylation at Ser-1692 abolishes G(i) alpha subunit binding, promoting binding to GNAS. Interacts (via C-terminal SH2-like region) with growth factor receptors EGFR, INSR and KDR/VEGFR2 (via their autophosphorylated cytoplasmic tails). Forms a complex with EGFR and GNAI3 which leads to enhanced EGFR signaling and triggering of cell migration; ligand stimulation is required for recruitment of GNAI3 to the complex. Interacts (tyrosine-phosphorylated form) with phosphatidylinositol 3-kinase (PI3K) regulatory subunit PIK3R1/p85a (via SH2 domains); the interaction enables recruitment of PIK3R1 to the EGFR receptor, enhancing PI3K activity and cell migration. Interacts with serine/threonine-protein kinase PRKCQ; the interaction leads to phosphorylation of CCDC88A and inhibition of its guanine nucleotide exchange factor activity. Interacts (via C-terminus) with DISC1; the interaction is direct. Interacts with AKT proteins; the interaction is inhibited in the presence of DISC1. Interacts with AKT1/PKB (via C-terminus). The non-phosphorylated form interacts with phosphatidylinositol 4-phosphate [Pi(4)P] and weakly with phosphatidylinositol 3-phosphate [Pi(3)P]. Interacts with microtubules. Interacts with actin. Post-translationally, phosphorylation is induced by epidermal growth factor (EGF) in a phosphoinositide 3-kinase (PI3K)-dependent manner. Phosphorylation by AKT1/PKB is necessary for the delocalization from the cell membrane and for cell migration. Phosphorylated on tyrosine residues which promotes binding to phosphatidylinositol 3-kinase (PI3K) regulatory subunit PIK3R1/p85a and enhances PI3K activity. Tyrosine-phosphorylated by both receptor and non-receptor tyrosine kinases in vitro. Tyrosine phosphorylation is required for AKT1-dependent phosphorylation of Ser-1417. Phosphorylation at Ser-1692 by PRKCQ disrupts interaction with GNAI3 and inhibits guanine nucleotide exchange factor activity. In terms of tissue distribution, expressed in the dentate gyrus, pyramidal cell layer of hippocampal regions CA1 and CA3 at postnatal 15. Expressed highly in neurons. Weakly in neuron progenitors (at protein level). Expressed in the dentate granule cell layer of the hippocampus. Expressed highly in the adult testis, moderately in the brain and at a low level in the spleen, lungs and fat.

The protein resides in the cell membrane. It localises to the cytoplasm. The protein localises to the cytosol. Its subcellular location is the cytoplasmic vesicle. It is found in the cell projection. The protein resides in the lamellipodium. It localises to the cytoskeleton. The protein localises to the cilium basal body. Its subcellular location is the microtubule organizing center. It is found in the centrosome. The protein resides in the centriole. Its function is as follows. Bifunctional modulator of guanine nucleotide-binding proteins (G proteins). Acts as a non-receptor guanine nucleotide exchange factor which binds to and activates guanine nucleotide-binding protein G(i) alpha subunits. Also acts as a guanine nucleotide dissociation inhibitor for guanine nucleotide-binding protein G(s) subunit alpha GNAS. Essential for cell migration. Interacts in complex with G(i) alpha subunits with the EGFR receptor, retaining EGFR at the cell membrane following ligand stimulation and promoting EGFR signaling which triggers cell migration. Binding to Gi-alpha subunits displaces the beta and gamma subunits from the heterotrimeric G-protein complex which enhances phosphoinositide 3-kinase (PI3K)-dependent phosphorylation and kinase activity of AKT1/PKB. Phosphorylation of AKT1/PKB induces the phosphorylation of downstream effectors GSK3 and FOXO1/FKHR, and regulates DNA replication and cell proliferation. Binds in its tyrosine-phosphorylated form to the phosphatidylinositol 3-kinase (PI3K) regulatory subunit PIK3R1 which enables recruitment of PIK3R1 to the EGFR receptor, enhancing PI3K activity and cell migration. Plays a role as a key modulator of the AKT-mTOR signaling pathway, controlling the tempo of the process of newborn neuron integration during adult neurogenesis, including correct neuron positioning, dendritic development and synapse formation. Inhibition of G(s) subunit alpha GNAS leads to reduced cellular levels of cAMP and suppression of cell proliferation. Essential for the integrity of the actin cytoskeleton. Required for formation of actin stress fibers and lamellipodia. May be involved in membrane sorting in the early endosome. Plays a role in ciliogenesis and cilium morphology and positioning and this may partly be through regulation of the localization of scaffolding protein CROCC/Rootletin. This Mus musculus (Mouse) protein is Girdin (Ccdc88a).